A 510-amino-acid chain; its full sequence is MPTSGTTIELIDDQFPKDDSASSGIVDEVDLTEANILATGLNKKAPRIVNGFGSLMGSKEMVSVEFDKKGNEKKSNLDRLLEKDNQEKEEAKTKIHISEQPWTLNNWHQHLNWLNMVLVCGMPMIGWYFALSGKVPLHLNVFLFSVFYYAVGGVSITAGYHRLWSHRSYSAHWPLRLFYAIFGCASVEGSAKWWGHSHRIHHRYTDTLRDPYDARRGLWYSHMGWMLLKPNPKYKARADITDMTDDWTIRFQHRHYILLMLLTAFVIPTLICGYFFNDYMGGLIYAGFIRVFVIQQATFCINSLAHYIGTQPFDDRRTPRDNWITAIVTFGEGYHNFHHEFPTDYRNAIKWYQYDPTKVIIYLTSLVGLAYDLKKFSQNAIEEALIQQEQKKINKKKAKINWGPVLTDLPMWDKQTFLAKSKENKGLVIISGIVHDVSGYISEHPGGETLIKTALGKDATKAFSGGVYRHSNAAQNVLADMRVAVIKESKNSAIRMASKRGEIYETGKFF.

Topologically, residues 1 to 112 (MPTSGTTIEL…TLNNWHQHLN (112 aa)) are cytoplasmic. Residues 113–133 (WLNMVLVCGMPMIGWYFALSG) form a helical membrane-spanning segment. Residues 134–138 (KVPLH) lie on the Lumenal side of the membrane. The helical transmembrane segment at 139 to 159 (LNVFLFSVFYYAVGGVSITAG) threads the bilayer. Topologically, residues 160 to 255 (YHRLWSHRSY…DWTIRFQHRH (96 aa)) are cytoplasmic. Residues His-161, His-166, His-198, His-201, and His-202 each contribute to the Fe cation site. The Histidine box-1 signature appears at 161–166 (HRLWSH). A Histidine box-2 motif is present at residues 198 to 202 (HRIHH). The helical transmembrane segment at 256–276 (YILLMLLTAFVIPTLICGYFF) threads the bilayer. Residues 277–280 (NDYM) lie on the Lumenal side of the membrane. The helical transmembrane segment at 281–301 (GGLIYAGFIRVFVIQQATFCI) threads the bilayer. Residues 302 to 510 (NSLAHYIGTQ…GEIYETGKFF (209 aa)) are Cytoplasmic-facing. Fe cation-binding residues include His-306, His-335, His-338, and His-339. Positions 335–339 (HNFHH) match the Histidine box-3 motif. One can recognise a Cytochrome b5 heme-binding domain in the interval 409 to 487 (LPMWDKQTFL…LADMRVAVIK (79 aa)). Heme contacts are provided by His-444 and His-470.

This sequence belongs to the fatty acid desaturase type 1 family. Fe(2+) is required as a cofactor.

The protein resides in the endoplasmic reticulum membrane. The enzyme catalyses octadecanoyl-CoA + 2 Fe(II)-[cytochrome b5] + O2 + 2 H(+) = (9Z)-octadecenoyl-CoA + 2 Fe(III)-[cytochrome b5] + 2 H2O. The catalysed reaction is hexadecanoyl-CoA + 2 Fe(II)-[cytochrome b5] + O2 + 2 H(+) = (9Z)-hexadecenoyl-CoA + 2 Fe(III)-[cytochrome b5] + 2 H2O. In terms of biological role, stearoyl-CoA desaturase that utilizes O(2) and electrons from reduced cytochrome b5 to introduce the first double bond into saturated fatty acyl-CoA substrates. Catalyzes the insertion of a cis double bond at the delta-9 position into fatty acyl-CoA substrates including palmitoyl-CoA and stearoyl-CoA. Required for the biosynthesis of membrane phospholipids, cholesterol esters and triglycerides. Regulates fatty acid desaturation, that is, the ratio of unsaturated versus saturated fatty acyl chains, by competing with the acyltransferase STC1 for the common substrate C16:0-CoA. SCT1 sequesters C16:0-CoA into lipids, thereby shielding it from desaturation by OLE1. The chain is Acyl-CoA desaturase 1 (OLE1) from Saccharomyces cerevisiae (strain ATCC 204508 / S288c) (Baker's yeast).